The following is a 154-amino-acid chain: MSESYKVISDNRQARFQYEILEVFEAGLALTGTEVKSIRAGKVNLRDGFAQIRNEEAFLLNVHVSPHTNAGQFFNHDPRRTRKLLMHRQEIRKLIGKTEQKGLTLVPLKLYLQRGWIKVTIGLARGKKLHDKRESIKKRQDKRDMERALKRGAE.

Residues 132–154 are disordered; it reads KRESIKKRQDKRDMERALKRGAE.

Belongs to the SmpB family.

It is found in the cytoplasm. In terms of biological role, required for rescue of stalled ribosomes mediated by trans-translation. Binds to transfer-messenger RNA (tmRNA), required for stable association of tmRNA with ribosomes. tmRNA and SmpB together mimic tRNA shape, replacing the anticodon stem-loop with SmpB. tmRNA is encoded by the ssrA gene; the 2 termini fold to resemble tRNA(Ala) and it encodes a 'tag peptide', a short internal open reading frame. During trans-translation Ala-aminoacylated tmRNA acts like a tRNA, entering the A-site of stalled ribosomes, displacing the stalled mRNA. The ribosome then switches to translate the ORF on the tmRNA; the nascent peptide is terminated with the 'tag peptide' encoded by the tmRNA and targeted for degradation. The ribosome is freed to recommence translation, which seems to be the essential function of trans-translation. This Acaryochloris marina (strain MBIC 11017) protein is SsrA-binding protein.